Reading from the N-terminus, the 291-residue chain is Elongation factor Ts (291 aa).

An involved in Mg(2+) ion dislocation from EF-Tu region spans residues 79 to 82 (TDFV).

This sequence belongs to the EF-Ts family.

It localises to the cytoplasm. Functionally, associates with the EF-Tu.GDP complex and induces the exchange of GDP to GTP. It remains bound to the aminoacyl-tRNA.EF-Tu.GTP complex up to the GTP hydrolysis stage on the ribosome. The protein is Elongation factor Ts of Leuconostoc mesenteroides subsp. mesenteroides (strain ATCC 8293 / DSM 20343 / BCRC 11652 / CCM 1803 / JCM 6124 / NCDO 523 / NBRC 100496 / NCIMB 8023 / NCTC 12954 / NRRL B-1118 / 37Y).